The sequence spans 512 residues: Dihydroniloticin synthase CYP71CD2 (512 aa).

The chain crosses the membrane as a helical span at residues 1-21; it reads MNLQLDYFSITSFLVFLVVLF. Position 449 (Cys449) interacts with heme.

This sequence belongs to the cytochrome P450 family. Heme serves as cofactor.

Its subcellular location is the membrane. The catalysed reaction is tirucalla-7,24-dien-3beta-ol + 2 reduced [NADPH--hemoprotein reductase] + 2 O2 = dihydroniloticin + 2 oxidized [NADPH--hemoprotein reductase] + 2 H2O + 2 H(+). It functions in the pathway secondary metabolite biosynthesis; terpenoid biosynthesis. In terms of biological role, monooxygenase involved in the biosynthesis of limonoids triterpene natural products such as azadirachtin, an antifeedant widely used as bioinsecticide, and possessing many medicinal applications including anti-tumoral, anti-malarial, anti-rheumatic, antibacterial, anti-inflammatory, anti-pyretic and diuretic effects. Catalyzes the conversion of tirucalladienol to dihydroniloticin. This chain is Dihydroniloticin synthase CYP71CD2, found in Azadirachta indica (Neem tree).